Reading from the N-terminus, the 33-residue chain is GIMDTLKNLAKTAGKGALQSLVKMASCKLSGQC.

A disulfide bridge connects residues C27 and C33.

Expressed by the skin glands.

The protein localises to the secreted. Functionally, shows antibacterial activity against representative Gram-negative and Gram-positive bacterial species, and hemolytic activity. This is Brevinin-2Ef from Pelophylax ridibundus (Marsh frog).